The chain runs to 469 residues: Protein RUFY3 (469 aa).

A phosphothreonine mark is found at threonine 5 and threonine 12. A phosphoserine mark is found at serine 34 and serine 49. Threonine 51 carries the phosphothreonine modification. Residues 95 to 227 form the RUN domain; sequence DSDYAPLQQF…IDANFCMKGE (133 aa). Coiled coils occupy residues 271 to 362 and 422 to 463; these read NRHL…VEKE and KSEL…AANK.

In terms of assembly, interacts with PAK1. Interacts (via C-terminus) with Ras-related Rab-5 proteins. Interacts (via C-terminus) with Ras-related Rap-2 proteins. Interacts with PIK3CA and PIK3R1. Interacts (via N-terminus) with FSCN1; this interaction induces neuron axon development. Interacts with DBN1. Interacts (via the second coiled coil) with GTP-, but not GDP-bound ARL8A and ARL8B. Interacts with dynactin/DCTN1 and the dynein intermediate chain DYNC1I1/2. Directly interacts with DYNC1LI1. Isoform 1 is partially phosphorylated. Phosphorylated by PAK1. Expressed in brain (at protein level).

The protein resides in the cytoplasm. Its subcellular location is the endomembrane system. The protein localises to the cell projection. It is found in the invadopodium. It localises to the growth cone. The protein resides in the perikaryon. Its subcellular location is the filopodium. The protein localises to the lamellipodium. It is found in the lysosome. ARL8 effector that promotes the coupling of endolysosomes to dynein-dynactin for retrograde transport along microtubules. Acts by binding both GTP-bound ARL8 and dynein-dynactin. In nonneuronal cells, promotes concentration of endolysosomes in the juxtanuclear area. In hippocampal neurons, drives retrograde transport of endolysosomes from the axon to the soma. Plays a role in the generation of neuronal polarity formation and axon growth. Implicated in the formation of a single axon by developing neurons. May inhibit the formation of additional axons by inhibition of PI3K in minor neuronal processes. Plays a role in the formation of F-actin-enriched protrusive structures at the cell periphery. Plays a role in cytoskeletal organization by regulating the subcellular localization of FSCN1 and DBN1 at axonal growth cones. The sequence is that of Protein RUFY3 from Rattus norvegicus (Rat).